A 434-amino-acid polypeptide reads, in one-letter code: dTDP-D-glucose 4,6-dehydratase (434 aa).

Thr134 is a substrate binding site. Asp135 functions as the Proton donor in the catalytic mechanism. Residues Glu136 and Tyr169 each act as proton acceptor in the active site. Residues Asn286–Asn309 show a composition bias toward low complexity. The interval Asn286 to Asp310 is disordered.

The protein belongs to the NAD(P)-dependent epimerase/dehydratase family. dTDP-glucose dehydratase subfamily. NAD(+) serves as cofactor.

The enzyme catalyses dTDP-alpha-D-glucose = dTDP-4-dehydro-6-deoxy-alpha-D-glucose + H2O. The sequence is that of dTDP-D-glucose 4,6-dehydratase (tgds) from Dictyostelium discoideum (Social amoeba).